The chain runs to 1045 residues: Protein madd-4 (1045 aa).

The N-terminal stretch at 1–23 (MKCSYTVVFLLFYLLIASFHVDA) is a signal peptide. TSP type-1 domains are found at residues 24-71 (LSWA…KTCE), 236-292 (RCRW…NCVS), 294-510 (SCGR…HPCP), 512-572 (FWLT…NVVA), and 576-635 (TWVT…GSCS). Disulfide bonds link Cys-35–Cys-65, Cys-39–Cys-70, and Cys-50–Cys-55. N-linked (GlcNAc...) asparagine glycans are attached at residues Asn-268 and Asn-280. An Ig-like C2-type domain is found at 637-732 (PELLSNRVFE…FTDRLQGNVT (96 aa)). Cys-674 and Cys-722 are joined by a disulfide. Asn-730 and Asn-781 each carry an N-linked (GlcNAc...) asparagine glycan. Positions 811–873 (RWDIGHWSEC…TRPCHREDCP (63 aa)) constitute a TSP type-1 6 domain. 2 N-linked (GlcNAc...) asparagine glycosylation sites follow: Asn-899 and Asn-906. In terms of domain architecture, TSP type-1 7 spans 932–990 (CKAEWRTSDWGSCSSECGTGGVQLRLLSCVWISSGRPAGRNCEQMRRPHSARACVADEP). The PLAC domain maps to 1004–1041 (RDASCQDQSRFCDIIKLFHSCDSLEVRQKCCSTCTFVE).

Interacts with eva-1 (via the SUEL-type lectin domain). Interacts with unc-5. Interacts with unc-40; the interaction is required for the localization of unc-40 to postsynaptic domains. Isoform a forms homodimers and heterodimers with isoform b. Isoform b forms homodimers and heterodimers with isoform a. Isoform b interacts with nlg-1 (via extracellular domain); the interaction is required for nlg-1 localization to postsynaptic domains. Isoform b interacts (via the Ig-like C2-type domain) with nrx-1 (via C-terminus). Isoform a: Expressed in the commissural GABAergic and cholinergic motor neurons in the first larval stage but only in the cholinergic motor neurons in later larval stages and in adult animals. At the L1 larval stage, mainly localized at the nerve ring and at the dorsal cord. Isoform b: Expressed in the commissural GABAergic and cholinergic motor neurons whose cell bodies reside in the ventral nerve cord and which extend axons into the ventral and dorsal nerve cord. Also expressed in the head neurons RIA, RIC, lateral IL1s, lateral IL2s, OLLs, RMEs and SABs, all of which extend axons into the nerve ring. Expressed in the embryogenic blast cells and the corresponding terminally differentiated ventral cord motor neurons and head neurons.

It is found in the cell projection. The protein localises to the axon. The protein resides in the secreted. It localises to the synapse. Its subcellular location is the extracellular space. It is found in the extracellular matrix. Component of an extracellular matrix cue that is involved in the guidance of dorsoventral midline migrations and in the specification of postsynaptic domains at neuromuscular junctions (NMJs). Acts as a ligand for the netrin receptor unc-40 and the neuroligin receptor nlg-1. Secreted by the dorsal and ventral nerve cords to attract sensory axons and muscle membrane extensions called muscle arms. In parallel with unc-6 and slt-1, involved in the netrin receptor unc-40 dependent guidance of the AVM and PVM mechanosensory axons along the dorsal-ventral axis. The unc-40 coreceptor eva-1 is enhancing the responsiveness of unc-40 to the madd-4 guidance cue to attract the muscle arm extensions and AVM mechanosensory axons towards the dorsoventral midline. Acts as a synaptic organizer and is required for the specification of inhibitory GABAergic and excitatory cholinergic identities of postsynaptic domains at neuromuscular junctions (NMJs). Required for the recruitment of unc-40 to both cholinergic and GABAergic NMJs. Promotes the clustering of ACh receptors and GABA(A) receptors at postsynaptic sites during synaptogenesis. The binding to the presynaptic adhesion protein nrx-1 and to the neuroligin nlg-1 at postsynaptic sites promotes clustering of GABAergic receptors at postsynaptic NMJs, thereby contributing to normal GABAergic synaptic transmission. Functionally, isoform a and isoform c: Promotes the clustering of acetylcholine receptors (AChR) at excitatory cholinergic synapses of NMJs via the netrin receptor unc-40. In terms of biological role, acts as a guidance cue in the attraction of muscle membrane extensions (muscle arms) to the dorsal cord and in cooperation with unc-6 to the ventral cord via the netrin receptor unc-40 and via the unc-40 coreceptor eva-1. Together with nrx-1, clusters netrin receptor unc-40 and neuroligin nlg-1 at postsynaptic sites of GABAergic NMJs, thereby promoting the recruitment of GABA(A) receptors at GABAergic synapses. Prevents the recruitment of GABAergic receptors to cholinergic synapses. The protein is Protein madd-4 of Caenorhabditis elegans.